The following is a 248-amino-acid chain: Protein PIMREG (248 aa).

Residues 1-10 (MASRWQNMGT) are compositionally biased toward polar residues. Residues 1–32 (MASRWQNMGTSVRRRSLQHQEQLEDSKELQPV) are disordered. 2 positions are modified to phosphoserine: Ser-11 and Ser-16. 2 consecutive short sequence motifs (D-box) follow at residues 14–17 (RRSL) and 53–56 (RLPL). The disordered stretch occupies residues 117–205 (KARRRKRGAQ…PSESDSDLEP (89 aa)). Ser-129 is subject to Phosphoserine. Ser-131 carries the phosphoserine; by UHMK1; in vitro modification. Polar residues-rich tracts occupy residues 132 to 143 (PTHSLSQKSTRL) and 186 to 198 (PYSS…SPSE). Residues Ser-199 and Ser-201 each carry the phosphoserine modification.

In terms of assembly, isoform 1 and isoform 2 interact with PICALM; this interaction may target PICALM to the nucleus. During mitosis, associates with HDAC2 and MTA2 subunits of the chromatin-remodeling NuRD complex; this association is strongest at prometaphase and decreases as the cell progresses through metaphase and anaphase. Ubiquitinated by the anaphase-promoting complex/cyclosome (APC/C) complex in the presence of FZR1, leading to its degradation by the proteasome during mitotic exit. However, degradation is not essential for normal mitotic progression within a single cell cycle. Expressed in thymus (at protein level). Detected in spleen, colon, ovary and small intestines.

The protein localises to the nucleus. Its subcellular location is the nucleolus. Functionally, during mitosis, may play a role in the control of metaphase-to-anaphase transition. This is Protein PIMREG from Homo sapiens (Human).